The following is a 901-amino-acid chain: HTH-type transcriptional regulator MalT (901 aa).

39 to 46 (SPAGYGKT) contacts ATP. Positions 829–894 (ELIRTSPLTQ…DAVQHAQQLL (66 aa)) constitute an HTH luxR-type domain. Residues 853–872 (NEQIAGELDVAATTIKTHIR) constitute a DNA-binding region (H-T-H motif).

It belongs to the MalT family. As to quaternary structure, monomer in solution. Oligomerizes to an active state in the presence of the positive effectors ATP and maltotriose.

Activated by ATP and maltotriose, which are both required for DNA binding. In terms of biological role, positively regulates the transcription of the maltose regulon whose gene products are responsible for uptake and catabolism of malto-oligosaccharides. Specifically binds to the promoter region of its target genes, recognizing a short DNA motif called the MalT box. The chain is HTH-type transcriptional regulator MalT from Klebsiella pneumoniae (strain 342).